The sequence spans 890 residues: UPF0182 protein SYNW1212 (890 aa).

Helical transmembrane passes span 21 to 41 (WLLQ…AIRW), 64 to 84 (LTLL…NGLI), 98 to 118 (WQVS…LVAV), 134 to 154 (AVVL…SIPL), 173 to 193 (FAAL…CLGN), 219 to 239 (RLLM…CWLS), 268 to 288 (LLTV…SLLL), and 295 to 315 (VLAV…WLIL).

It belongs to the UPF0182 family.

The protein resides in the cell membrane. In Parasynechococcus marenigrum (strain WH8102), this protein is UPF0182 protein SYNW1212.